Consider the following 725-residue polypeptide: Rab-like protein 6 (725 aa).

Methionine 1 carries the N-acetylmethionine modification. The interval 39 to 279 (GVQYNMKIVI…IFLEMMEARS (241 aa)) is small GTPase-like. GTP contacts are provided by residues 50 to 57 (GDRNTGKT), 100 to 104 (DVVDK), and 177 to 179 (YRD). Disordered regions lie at residues 281-364 (GHAS…PAPA) and 378-725 (PAAE…YEEL). Low complexity-rich tracts occupy residues 291–325 (QSPS…QLSL) and 343–353 (AMPSSVHSSAP). The span at 410–427 (GLDRSFLEDTSVPKDKKV) shows a compositional bias: basic and acidic residues. Residues serine 414, serine 436, serine 438, serine 480, serine 482, serine 483, and serine 502 each carry the phosphoserine modification. The span at 499 to 514 (QQCSEPETKWSSTKVS) shows a compositional bias: polar residues. Basic and acidic residues predominate over residues 537–549 (DSERPQEGKDKQV). Acidic residues predominate over residues 569-578 (DDPDFESDES). Residues serine 575 and serine 594 each carry the phosphoserine modification. Threonine 597 bears the Phosphothreonine mark. The span at 632-649 (MGPKESSDEDRDSKLPSK) shows a compositional bias: basic and acidic residues. 3 positions are modified to phosphoserine: serine 637, serine 638, and serine 644. The interaction with CDKN2A stretch occupies residues 652–690 (KKKKKKSKEEEEKTTKKKSKHKKSKDKEEGKEDRKKKRK). The span at 666–675 (TKKKSKHKKS) shows a compositional bias: basic residues. The span at 707–725 (LGGGAPGSRHPGGGDYEEL) shows a compositional bias: gly residues.

The protein belongs to the small GTPase superfamily. Rab family.

The protein resides in the nucleus. It is found in the cytoplasm. Functionally, may enhance cellular proliferation. May reduce growth inhibitory activity of CDKN2A. This is Rab-like protein 6 (Rabl6) from Mus musculus (Mouse).